Consider the following 477-residue polypeptide: tRNA(Ile)-lysidine synthase (477 aa).

Residue 36–41 (SGGADS) coordinates ATP.

This sequence belongs to the tRNA(Ile)-lysidine synthase family.

It localises to the cytoplasm. The catalysed reaction is cytidine(34) in tRNA(Ile2) + L-lysine + ATP = lysidine(34) in tRNA(Ile2) + AMP + diphosphate + H(+). Ligates lysine onto the cytidine present at position 34 of the AUA codon-specific tRNA(Ile) that contains the anticodon CAU, in an ATP-dependent manner. Cytidine is converted to lysidine, thus changing the amino acid specificity of the tRNA from methionine to isoleucine. This Treponema pallidum (strain Nichols) protein is tRNA(Ile)-lysidine synthase.